We begin with the raw amino-acid sequence, 98 residues long: NADH-ubiquinone oxidoreductase chain 4L (98 aa).

A run of 3 helical transmembrane segments spans residues 1-21 (MSMV…GLLM), 29-49 (SLLC…VTIL), and 61-81 (IILL…LVMV).

It belongs to the complex I subunit 4L family. In terms of assembly, core subunit of respiratory chain NADH dehydrogenase (Complex I) which is composed of 45 different subunits.

The protein localises to the mitochondrion inner membrane. The enzyme catalyses a ubiquinone + NADH + 5 H(+)(in) = a ubiquinol + NAD(+) + 4 H(+)(out). Functionally, core subunit of the mitochondrial membrane respiratory chain NADH dehydrogenase (Complex I) which catalyzes electron transfer from NADH through the respiratory chain, using ubiquinone as an electron acceptor. Part of the enzyme membrane arm which is embedded in the lipid bilayer and involved in proton translocation. This is NADH-ubiquinone oxidoreductase chain 4L (MT-ND4L) from Eumetopias jubatus (Steller sea lion).